The chain runs to 282 residues: Shikimate dehydrogenase (NADP(+)) (282 aa).

Shikimate is bound by residues 18-20 and T65; that span reads SRS. K69 functions as the Proton acceptor in the catalytic mechanism. E81 provides a ligand contact to NADP(+). Positions 90 and 105 each coordinate shikimate. NADP(+) is bound by residues 130 to 134, 154 to 159, and M222; these read GAGGA and NRTPAR. Y224 contributes to the shikimate binding site. G245 serves as a coordination point for NADP(+).

This sequence belongs to the shikimate dehydrogenase family. As to quaternary structure, homodimer.

The enzyme catalyses shikimate + NADP(+) = 3-dehydroshikimate + NADPH + H(+). It functions in the pathway metabolic intermediate biosynthesis; chorismate biosynthesis; chorismate from D-erythrose 4-phosphate and phosphoenolpyruvate: step 4/7. In terms of biological role, involved in the biosynthesis of the chorismate, which leads to the biosynthesis of aromatic amino acids. Catalyzes the reversible NADPH linked reduction of 3-dehydroshikimate (DHSA) to yield shikimate (SA). This is Shikimate dehydrogenase (NADP(+)) from Acidovorax ebreus (strain TPSY) (Diaphorobacter sp. (strain TPSY)).